We begin with the raw amino-acid sequence, 315 residues long: Lipoyl synthase (315 aa).

[4Fe-4S] cluster is bound by residues Cys62, Cys67, Cys73, Cys88, Cys92, Cys95, and Ser302. The region spanning 74 to 291 (FNHGAATFMI…KKIALKLGFS (218 aa)) is the Radical SAM core domain.

Belongs to the radical SAM superfamily. Lipoyl synthase family. [4Fe-4S] cluster is required as a cofactor.

The protein localises to the cytoplasm. The catalysed reaction is [[Fe-S] cluster scaffold protein carrying a second [4Fe-4S](2+) cluster] + N(6)-octanoyl-L-lysyl-[protein] + 2 oxidized [2Fe-2S]-[ferredoxin] + 2 S-adenosyl-L-methionine + 4 H(+) = [[Fe-S] cluster scaffold protein] + N(6)-[(R)-dihydrolipoyl]-L-lysyl-[protein] + 4 Fe(3+) + 2 hydrogen sulfide + 2 5'-deoxyadenosine + 2 L-methionine + 2 reduced [2Fe-2S]-[ferredoxin]. Its pathway is protein modification; protein lipoylation via endogenous pathway; protein N(6)-(lipoyl)lysine from octanoyl-[acyl-carrier-protein]: step 2/2. Functionally, catalyzes the radical-mediated insertion of two sulfur atoms into the C-6 and C-8 positions of the octanoyl moiety bound to the lipoyl domains of lipoate-dependent enzymes, thereby converting the octanoylated domains into lipoylated derivatives. This Ruthia magnifica subsp. Calyptogena magnifica protein is Lipoyl synthase.